We begin with the raw amino-acid sequence, 355 residues long: Acidic fibroblast growth factor intracellular-binding protein B (355 aa).

In terms of assembly, interacts with IER2.

The protein localises to the nucleus. It localises to the endomembrane system. Its function is as follows. Mediates with IER2 FGF-signaling in Kupffer's vesicle ciliogenesis and in the establishment of laterality in the embryo. May be involved in mitogenic function of FGF1. The protein is Acidic fibroblast growth factor intracellular-binding protein B of Danio rerio (Zebrafish).